We begin with the raw amino-acid sequence, 1059 residues long: WD repeat-containing protein on Y chromosome (1059 aa).

11 WD repeats span residues 121 to 161 (DFCP…ALTA), 170 to 209 (RSKTWVLDTVPLPDLSMFCVTGLETELRLYNVVAACFTLK), 214 to 256 (RLPQ…KVTT), 344 to 383 (CVPRGVTCFAFEPSNELLVSGGPDCDLRLWDIHRPEKPSV), 387 to 426 (GHTSSITFLFLQDAGEKIYSLDQRKIIKVWDVRNRVLLQT), 476 to 515 (SHTKPVSVLLYNGLYRLVVSCGFDSFIIVWDHRVNRKMTI), 528 to 567 (LEPVEITAACFDGKEQMLLTGARNGSLKIWNIGGRTCMRT), 616 to 658 (QHSD…RRYD), 714 to 759 (MRQL…GFKG), 766 to 805 (MAGDRIITLATDKANRFLFTGTALGYVKTWYIENCWIPNE), and 849 to 888 (AHRACVTGLTYLDDTGLLLSCSSDRTVRLWTLGGRYIGLL).

The chain is WD repeat-containing protein on Y chromosome from Anopheles gambiae (African malaria mosquito).